Here is a 121-residue protein sequence, read N- to C-terminus: Small ribosomal subunit protein bS6 (121 aa).

A disordered region spans residues 102–121; the sequence is MMRNVEREEARKAQQQEYAA. The span at 105-115 shows a compositional bias: basic and acidic residues; sequence NVEREEARKAQ.

It belongs to the bacterial ribosomal protein bS6 family.

Functionally, binds together with bS18 to 16S ribosomal RNA. The chain is Small ribosomal subunit protein bS6 from Polaromonas sp. (strain JS666 / ATCC BAA-500).